A 196-amino-acid polypeptide reads, in one-letter code: MPKVGMQPIRRSQLIAATLEAVDQVGMADASIAYIARLAGVSNGIISHYFNDKNGLLEATMRHLMQALSAAVGKRRRALDEDSPRAHLRAMIDGNFDDSQVSGPAMKTWLAFWASSMHQPALRRLQRVNDHRLYSNLCGQFRRVLPQDQARFAARGLASLIDGLWLRGALSGEAFDTEQARRIAYDYLDLQLNKAR.

The 61-residue stretch at P8–L68 folds into the HTH tetR-type domain. The segment at residues S31–F50 is a DNA-binding region (H-T-H motif).

The protein operates within amine and polyamine biosynthesis; betaine biosynthesis via choline pathway [regulation]. In terms of biological role, repressor involved in the biosynthesis of the osmoprotectant glycine betaine. It represses transcription of the choline transporter BetT and the genes of BetAB involved in the synthesis of glycine betaine. This Ectopseudomonas mendocina (strain ymp) (Pseudomonas mendocina) protein is HTH-type transcriptional regulator BetI.